Consider the following 398-residue polypeptide: Succinate--CoA ligase [ADP-forming] subunit beta (398 aa).

The ATP-grasp domain occupies 9–254; sequence KRLLHEYGAP…LSEEDPKEIE (246 aa). ATP is bound by residues K46, 53–55, E109, A112, and E117; that span reads GRG. Mg(2+) contacts are provided by N209 and D223. Residues N274 and 331–333 contribute to the substrate site; that span reads GIM.

This sequence belongs to the succinate/malate CoA ligase beta subunit family. In terms of assembly, heterotetramer of two alpha and two beta subunits. Requires Mg(2+) as cofactor.

The catalysed reaction is succinate + ATP + CoA = succinyl-CoA + ADP + phosphate. It catalyses the reaction GTP + succinate + CoA = succinyl-CoA + GDP + phosphate. It functions in the pathway carbohydrate metabolism; tricarboxylic acid cycle; succinate from succinyl-CoA (ligase route): step 1/1. Functionally, succinyl-CoA synthetase functions in the citric acid cycle (TCA), coupling the hydrolysis of succinyl-CoA to the synthesis of either ATP or GTP and thus represents the only step of substrate-level phosphorylation in the TCA. The beta subunit provides nucleotide specificity of the enzyme and binds the substrate succinate, while the binding sites for coenzyme A and phosphate are found in the alpha subunit. This Bartonella tribocorum (strain CIP 105476 / IBS 506) protein is Succinate--CoA ligase [ADP-forming] subunit beta.